Here is a 585-residue protein sequence, read N- to C-terminus: Frizzled-5 (585 aa).

Positions 1 to 26 are cleaved as a signal peptide; it reads MARPDPSAPPSLLLLLLAQLVGRAAA. Over 27–238 the chain is Extracellular; it reads ASKAPVCQEI…PDERTFATFW (212 aa). The FZ domain occupies 28–150; that stretch reads SKAPVCQEIT…GDAEVLCMDY (123 aa). 5 disulfide bridges follow: Cys33–Cys94, Cys41–Cys87, Cys78–Cys116, Cys105–Cys147, and Cys109–Cys133. N-linked (GlcNAc...) asparagine glycosylation is present at Asn47. Asn151 carries N-linked (GlcNAc...) asparagine glycosylation. Residues 156–182 are disordered; that stretch reads TTASPKSFPAKPTLPGPPGAPSSGGEC. Residues 239–259 traverse the membrane as a helical segment; sequence IGLWSVLCFISTSTTVATFLI. Over 260–270 the chain is Cytoplasmic; that stretch reads DMERFRYPERP. The chain crosses the membrane as a helical span at residues 271–291; it reads IIFLSACYLCVSLGFLVRLVV. The Extracellular segment spans residues 292–315; sequence GHASVACSREHSHIHYETTGPALC. Residues 316-336 traverse the membrane as a helical segment; sequence TVVFLLVYFFGMASSIWWVIL. The Cytoplasmic portion of the chain corresponds to 337–358; that stretch reads SLTWFLAAGMKWGNEAIAGYAQ. Residues 359 to 379 form a helical membrane-spanning segment; it reads YFHLAAWLIPSVKSITALALS. Over 380-402 the chain is Extracellular; that stretch reads SVDGDPVAGVCYVGNQNLNSLRG. A helical transmembrane segment spans residues 403–423; it reads FVLGPLVLYLLVGTLFLLAGF. Residues 424–449 are Cytoplasmic-facing; the sequence is VSLFRIRSVIKQGGTKTDKLEKLMIR. Residues 450 to 470 form a helical membrane-spanning segment; that stretch reads IGIFTLLYTVPASIVVACYLY. Residues 471-500 are Extracellular-facing; it reads EQHYRESWEAALTCACPGSDAGQPRAKPEY. The chain crosses the membrane as a helical span at residues 501-521; that stretch reads WVLMLKYFMCLVVGITSGVWI. The Cytoplasmic segment spans residues 522 to 585; the sequence is WSGKTLESWR…YHKQVSLSHV (64 aa). The Lys-Thr-X-X-X-Trp motif, mediates interaction with the PDZ domain of Dvl family members motif lies at 525 to 530; it reads KTLESW. The short motif at 583 to 585 is the PDZ-binding element; it reads SHV.

It belongs to the G-protein coupled receptor Fz/Smo family. In terms of assembly, binding of unsaturated fatty acid molecules (via FZ domain) promotes homodimerization (via FZ domain). Interacts with WNT2B. Interacts with WNT7A. Interacts with GOPC. In terms of processing, ubiquitinated by RNF43 and ZNRF3, leading to its degradation by the proteasome.

The protein resides in the cell membrane. It localises to the golgi apparatus membrane. It is found in the synapse. Its subcellular location is the perikaryon. The protein localises to the cell projection. The protein resides in the dendrite. It localises to the axon. Receptor for Wnt proteins. Functions in the canonical Wnt/beta-catenin signaling pathway. In vitro activates WNT2, WNT10B, WNT5A, but not WNT2B or WNT4 signaling. In neurons, activation by WNT7A promotes formation of synapses. May be involved in transduction and intercellular transmission of polarity information during tissue morphogenesis and/or in differentiated tissues. Plays a role in yolk sac angiogenesis and in placental vascularization. Plays a role in ocular development. The chain is Frizzled-5 (Fzd5) from Rattus norvegicus (Rat).